We begin with the raw amino-acid sequence, 382 residues long: Galactokinase (382 aa).

34–37 (EHTD) lines the substrate pocket. 124–130 (GAGLSSS) serves as a coordination point for ATP. Positions 130 and 162 each coordinate Mg(2+). The active-site Proton acceptor is D174. Y223 contributes to the substrate binding site.

The protein belongs to the GHMP kinase family. GalK subfamily.

The protein localises to the cytoplasm. The catalysed reaction is alpha-D-galactose + ATP = alpha-D-galactose 1-phosphate + ADP + H(+). It participates in carbohydrate metabolism; galactose metabolism. Its function is as follows. Catalyzes the transfer of the gamma-phosphate of ATP to D-galactose to form alpha-D-galactose-1-phosphate (Gal-1-P). The sequence is that of Galactokinase from Shigella flexneri.